We begin with the raw amino-acid sequence, 94 residues long: Co-chaperonin GroES (94 aa).

Belongs to the GroES chaperonin family. Heptamer of 7 subunits arranged in a ring. Interacts with the chaperonin GroEL.

The protein localises to the cytoplasm. Functionally, together with the chaperonin GroEL, plays an essential role in assisting protein folding. The GroEL-GroES system forms a nano-cage that allows encapsulation of the non-native substrate proteins and provides a physical environment optimized to promote and accelerate protein folding. GroES binds to the apical surface of the GroEL ring, thereby capping the opening of the GroEL channel. This is Co-chaperonin GroES from Bacillus mycoides (strain KBAB4) (Bacillus weihenstephanensis).